A 707-amino-acid polypeptide reads, in one-letter code: F-box/WD repeat-containing protein 7 (707 aa).

The tract at residues 1-151 is disordered; the sequence is MNQELLSVGS…SVTNSSSIVD (151 aa). Ser26 bears the Phosphoserine; by ATM mark. A compositionally biased stretch (low complexity) spans 57-68; sequence GEVVGVEPRPGG. The segment covering 69–84 has biased composition (polar residues); sequence QNDSQQGQLEENNNRF. Over residues 87–129 the composition is skewed to acidic residues; the sequence is VDEDSSGNQEEQEEDEEHAGEQDEEDEEEEEMDQESDDFDQSD. The span at 130–139 shows a compositional bias: basic and acidic residues; the sequence is DSSREDEHTH. Thr205 carries the post-translational modification Phosphothreonine. Ser227 is modified (phosphoserine; by SGK1). Residues 278–324 enclose the F-box domain; the sequence is RDFISLLPKELALYVLSFLEPKDLLQAAQTCRYWRILAEDNLLWREK. 7 WD repeats span residues 378 to 418, 420 to 456, 459 to 498, 500 to 536, 539 to 578, 580 to 618, and 622 to 659; these read GHDD…RTLV, HTGG…CIHT, GHTS…HVLM, HVAA…CLHT, GHTN…HTLT, HQSL…QTLQ, and KHQS…FIRN.

As to quaternary structure, homodimer; homodimerization plays a role in substrate binding and/or ubiquitination and degradation. Component of the SCF(FBXW7) complex consisting of CUL1, RBX1, SKP1 and FBXW7. Interacts (via F-box domain) with SKP1. Interacts (via F-box domain) with pseudophosphatase STYX; the interaction is direct and prevents FBXW7 interaction with SKP1. Interacts with cyclin-E (CCNE1 or CCNE2). Interacts with PSEN1. Forms a trimeric complex with NOTCH1 and SGK1. Interacts with NOTCH1 intracellular domain/NICD and NOTCH4 intracellular domain/NICD. Interacts with NOTCH2 intracellular domain (N2ICD). Interacts with MYC (when phosphorylated). Interacts with USP28, counteracting ubiquitination of MYC. Interacts with JUN. Found in a complex with JUN and PRR7. Interacts with JUN and PRR7; the interaction inhibits ubiquitination-mediated JUN degradation, promoting its phosphorylation and transcriptional activity. Interacts (when phosphorylated at Thr-205) with PIN1, disrupting FBXW7 dimerization and promoting FBXW7 autoubiquitination and degradation. Interacts with UBE2QL1. Interacts with FAM83D; promotes FBXW7 degradation. Interacts with MYCN; FBXW7 competes with AURKA for binding to unphosphorylated MYCN but not for binding to phosphorylated MYCN. Interacts with STOML1. Interacts with NFE2L1. Interacts with USP36, counteracting ubiquitination of MYC. Interacts with NR1D1. Interacts with RICTOR; mediates RICTOR ubiquitination and degradation. Interacts with USP38, counteracting ubiquitination of MYC. (Microbial infection) Interacts (via WD repeats) with SV40 large T antigen (via CPD region). Phosphorylation at Thr-205 promotes interaction with PIN1, leading to disrupt FBXW7 dimerization and promoting FBXW7 autoubiquitination and degradation. Phosphorylated by ATM at Ser-26 in response to DNA damage, promoting recruitment to DNA damage sites and 'Lys-63'-linked ubiquitination of phosphorylated XRCC4. Post-translationally, ubiquitinated: autoubiquitinates following phosphorylation at Thr-205 and subsequent interaction with PIN1. Ubiquitination leads to its proteasomal degradation. In terms of tissue distribution, widely expressed. Expressed in brain.

Its subcellular location is the nucleus. The protein localises to the nucleoplasm. It localises to the chromosome. The protein resides in the cytoplasm. It is found in the nucleolus. Its pathway is protein modification; protein ubiquitination. Functionally, substrate recognition component of a SCF (SKP1-CUL1-F-box protein) E3 ubiquitin-protein ligase complex which mediates the ubiquitination and subsequent proteasomal degradation of target proteins. Recognizes and binds phosphorylated sites/phosphodegrons within target proteins and thereafter brings them to the SCF complex for ubiquitination. Identified substrates include cyclin-E (CCNE1 or CCNE2), DISC1, JUN, MYC, NOTCH1 released notch intracellular domain (NICD), NFE2L1, NOTCH2, MCL1, MLST8, RICTOR, and probably PSEN1. Acts as a negative regulator of JNK signaling by binding to phosphorylated JUN and promoting its ubiquitination and subsequent degradation. Involved in bone homeostasis and negative regulation of osteoclast differentiation. Regulates the amplitude of the cyclic expression of hepatic core clock genes and genes involved in lipid and glucose metabolism via ubiquitination and proteasomal degradation of their transcriptional repressor NR1D1; CDK1-dependent phosphorylation of NR1D1 is necessary for SCF(FBXW7)-mediated ubiquitination. Also able to promote 'Lys-63'-linked ubiquitination in response to DNA damage. The SCF(FBXW7) complex facilitates double-strand break repair following phosphorylation by ATM: phosphorylation promotes localization to sites of double-strand breaks and 'Lys-63'-linked ubiquitination of phosphorylated XRCC4, enhancing DNA non-homologous end joining. The protein is F-box/WD repeat-containing protein 7 of Homo sapiens (Human).